An 86-amino-acid chain; its full sequence is Large ribosomal subunit protein bL27 (86 aa).

Positions 1–24 (MAHKKGTGSTRNGRDSNSKRLGVK) are disordered.

The protein belongs to the bacterial ribosomal protein bL27 family.

The chain is Large ribosomal subunit protein bL27 from Prochlorococcus marinus (strain AS9601).